Consider the following 59-residue polypeptide: UPF0434 protein plu1633 (59 aa).

The protein belongs to the UPF0434 family.

The protein is UPF0434 protein plu1633 of Photorhabdus laumondii subsp. laumondii (strain DSM 15139 / CIP 105565 / TT01) (Photorhabdus luminescens subsp. laumondii).